The sequence spans 422 residues: MNSSHSFNQTYSASVHSLGSTRGRQGSCHRAPSVHGGAGGVRISLSFTTPGCLPPGGSWGSGRSSPLLGGNGKATMQNLNDRLATYLEKVRALEEANSKLETRILRWHQEREPSHRKDYSQYEENISRLQEQIVDGKMANAHIVVLIDNARMAVDDFNLKFENEHSLKKDLEIEVEGLRKTLDDLTIVTTDLEQEVEGMRKELILMKKRHEQEMEENHLPSDFKVSVKVDTTPGEDLIKVLEDMRQEYELIIKKKHQELDTWFREQSAAMAQEVASPAPVQGNQSDIHELRRTFQALEIDLQAQHSRKTALENMLTETRARYSCRLQDMQQIISHYEEELIQLRQDLERQNNEHKVLLGIKTHLEKEIATYRRLLEGDTEGTMDGSESRLKGSEASTIKAITQESVNGRIVLSQVNEIQKHI.

Over residues 1–24 (MNSSHSFNQTYSASVHSLGSTRGR) the composition is skewed to polar residues. A disordered region spans residues 1 to 35 (MNSSHSFNQTYSASVHSLGSTRGRQGSCHRAPSVH). The segment at 1–71 (MNSSHSFNQT…GRSSPLLGGN (71 aa)) is head. A coil 1A region spans residues 72–107 (GKATMQNLNDRLATYLEKVRALEEANSKLETRILRW). One can recognise an IF rod domain in the interval 72-382 (GKATMQNLND…RLLEGDTEGT (311 aa)). Residues 108–125 (HQEREPSHRKDYSQYEEN) are linker 1. Positions 126–217 (ISRLQEQIVD…KRHEQEMEEN (92 aa)) are coil 1B. Positions 218-240 (HLPSDFKVSVKVDTTPGEDLIKV) are linker 12. Residues 241 to 378 (LEDMRQEYEL…ATYRRLLEGD (138 aa)) form a coil 2 region. The interval 379–422 (TEGTMDGSESRLKGSEASTIKAITQESVNGRIVLSQVNEIQKHI) is rod-like helical tail.

This sequence belongs to the intermediate filament family. Heterotetramer of two type I and two type II keratins.

This is Keratin, type I cytoskeletal 23 (Krt23) from Mus musculus (Mouse).